The following is a 923-amino-acid chain: Alanine--tRNA ligase (923 aa).

Zn(2+) is bound by residues His611, His615, Cys714, and His718. The segment covering 886-903 (VGGGGGGRPNMARGGGTD) has biased composition (gly residues). The disordered stretch occupies residues 886 to 909 (VGGGGGGRPNMARGGGTDPSGMDN).

The protein belongs to the class-II aminoacyl-tRNA synthetase family. Requires Zn(2+) as cofactor.

Its subcellular location is the cytoplasm. It catalyses the reaction tRNA(Ala) + L-alanine + ATP = L-alanyl-tRNA(Ala) + AMP + diphosphate. Catalyzes the attachment of alanine to tRNA(Ala) in a two-step reaction: alanine is first activated by ATP to form Ala-AMP and then transferred to the acceptor end of tRNA(Ala). Also edits incorrectly charged Ser-tRNA(Ala) and Gly-tRNA(Ala) via its editing domain. The chain is Alanine--tRNA ligase from Methanococcoides burtonii (strain DSM 6242 / NBRC 107633 / OCM 468 / ACE-M).